The primary structure comprises 427 residues: MKRRKRGRGIVNADRISQLPEALIIQILSLLPTEVAVTTSVLSKQWQFLWKMLPKLNFDSLDQRHEFKTFSKNVKRALLSHKAPVLHSLHLIVHLHLCNSMNTAKLIGIAFACNLRKLVLEVDGGRFSIPESLYNCETLDTLELKYSILMDVPSSICLKSLRTLHLHYVDFKDNESALNLLSGCPNLENLVVHRYPFSSVKTYTIAVSSLKRLTIYTSSTVDPRAGYVINSPSLTYLKIVGQIGFCLIENVPELVEASMIVSSQIINKNLLESLTSVKRLFLEFSPLMIKFPAGSIFYQLVYLELLTHEAECLNLLTLMLNSSPKLQILKLLSPKYQSWKKDVVGKWNKPKIVPECLLFHLETFMWKGYEWKRNDETEVAKYILSNTNRLKRATFFSKPISSEERVKMVKNLNSVVRALNSCQLLIK.

The F-box domain occupies 13 to 61 (ADRISQLPEALIIQILSLLPTEVAVTTSVLSKQWQFLWKMLPKLNFDSL). LRR repeat units lie at residues 67 to 93 (FKTF…HLIV), 98 to 122 (CNSM…VLEV), 141 to 168 (TLEL…HLHY), 169 to 194 (VDFK…VVHR), 213 to 241 (LTIY…KIVG), and 258 to 284 (SMIV…FLEF). One can recognise an FBD domain in the interval 346–396 (KWNKPKIVPECLLFHLETFMWKGYEWKRNDETEVAKYILSNTNRLKRATFF).

This chain is Putative F-box/FBD/LRR-repeat protein At4g13965, found in Arabidopsis thaliana (Mouse-ear cress).